A 290-amino-acid chain; its full sequence is Phycobilisome 32.3 kDa linker polypeptide, phycocyanin-associated, rod (290 aa).

The 179-residue stretch at 1–179 (MPVTVAASRL…LQRGYANSDR (179 aa)) folds into the PBS-linker domain. In terms of domain architecture, CpcD-like spans 236-288 (DQVVRVEVAALSTPRYPRIRRSSRVFFVPVSRLSQKLQEIQRMGGRVASISPA).

It belongs to the phycobilisome linker protein family.

It localises to the cellular thylakoid membrane. In terms of biological role, rod linker protein, associated with phycocyanin. Linker polypeptides determine the state of aggregation and the location of the disk-shaped phycobiliprotein units within the phycobilisome and modulate their spectroscopic properties in order to mediate a directed and optimal energy transfer. The chain is Phycobilisome 32.3 kDa linker polypeptide, phycocyanin-associated, rod (cpcC) from Picosynechococcus sp. (strain ATCC 27264 / PCC 7002 / PR-6) (Agmenellum quadruplicatum).